Reading from the N-terminus, the 239-residue chain is Nicotinamide riboside transporter PnuC (239 aa).

Over 1–21 (MDFFSVQNILVHIPIGAGGYD) the chain is Cytoplasmic. A helical transmembrane segment spans residues 22-42 (LSWIEAVGTIAGLLCIGLASL). The Periplasmic portion of the chain corresponds to 43 to 48 (EKISNY). A helical membrane pass occupies residues 49-68 (FFGLINVTLFGIIFFQIQLY). At 69–71 (ASL) the chain is on the cytoplasmic side. Residues 72–89 (LLQVFFFAANIYGWYAWS) traverse the membrane as a helical segment. Topologically, residues 90-109 (RQTSQNEAELKIRWLPLPKA) are periplasmic. The chain crosses the membrane as a helical span at residues 110-127 (LSWLAVCVVSIGLMTVFI). Residues 128–157 (NPVFAFLTRVAVMIMQALGLQVVMPELQPD) lie on the Cytoplasmic side of the membrane. The chain crosses the membrane as a helical span at residues 158-177 (AFPFWDSCMMVLSIVAMILM). The Periplasmic portion of the chain corresponds to 178–183 (TRKYVE). The chain crosses the membrane as a helical span at residues 184–206 (NWLLWVIINVISVVIFALQGVYA). W188 and N192 together coordinate beta-nicotinamide D-riboside. The Cytoplasmic segment spans residues 207–239 (MSLEYIILTFIALNGSRMWINSARERGSRALSH).

It belongs to the nicotinamide ribonucleoside (NR) uptake permease (TC 4.B.1) family.

It is found in the cell inner membrane. Required for nicotinamide riboside transport across the inner membrane. In Escherichia coli (strain K12), this protein is Nicotinamide riboside transporter PnuC (pnuC).